The primary structure comprises 76 residues: DNA gyrase inhibitor YacG (76 aa).

Zn(2+)-binding residues include C20, C23, C39, and C43. Residues 54-76 (EEKSIPGAPDLSDSDGWSDDMGY) form a disordered region. Over residues 65–76 (SDSDGWSDDMGY) the composition is skewed to acidic residues.

This sequence belongs to the DNA gyrase inhibitor YacG family. Interacts with GyrB. Zn(2+) is required as a cofactor.

Functionally, inhibits all the catalytic activities of DNA gyrase by preventing its interaction with DNA. Acts by binding directly to the C-terminal domain of GyrB, which probably disrupts DNA binding by the gyrase. The chain is DNA gyrase inhibitor YacG from Photobacterium profundum (strain SS9).